A 217-amino-acid polypeptide reads, in one-letter code: 3,4-dihydroxy-2-butanone 4-phosphate synthase (217 aa).

D-ribulose 5-phosphate-binding positions include 37–38 (RE), Asp42, 150–154 (RRGHT), and Glu174. Residue Glu38 participates in Mg(2+) binding. Position 153 (His153) interacts with Mg(2+).

The protein belongs to the DHBP synthase family. Homodimer. The cofactor is Mg(2+). Requires Mn(2+) as cofactor.

It carries out the reaction D-ribulose 5-phosphate = (2S)-2-hydroxy-3-oxobutyl phosphate + formate + H(+). It functions in the pathway cofactor biosynthesis; riboflavin biosynthesis; 2-hydroxy-3-oxobutyl phosphate from D-ribulose 5-phosphate: step 1/1. In terms of biological role, catalyzes the conversion of D-ribulose 5-phosphate to formate and 3,4-dihydroxy-2-butanone 4-phosphate. This is 3,4-dihydroxy-2-butanone 4-phosphate synthase from Shewanella loihica (strain ATCC BAA-1088 / PV-4).